A 271-amino-acid chain; its full sequence is MFWVNGLPQTHVPLGDRSFQYGDGCFSTIKTKKGQLEHWQAHVERMEACLTTLQIPFPDWRTVLDWAMSATLKDESAGIKIHISRGCGGRGYSPSGVEGPVVTISNFSFPAHYLAWQERGVQLGVCETRLGIQPLLAGHKHNNRIEQVLAKAEIDGTEFADAVTLNVQNHVIETTMANLFWVKDEKVFTPGLCLSGVAGVMRRKVLEYLQSEGYSVQVADFTLTDLLDADEVWMCNSLLGVAPVSGISAPENKIDFPIGKLTRRLQGNLNT.

The residue at position 140 (lysine 140) is an N6-(pyridoxal phosphate)lysine.

This sequence belongs to the class-IV pyridoxal-phosphate-dependent aminotransferase family. In terms of assembly, homodimer. Pyridoxal 5'-phosphate serves as cofactor.

It catalyses the reaction 4-amino-4-deoxychorismate = 4-aminobenzoate + pyruvate + H(+). The protein operates within cofactor biosynthesis; tetrahydrofolate biosynthesis; 4-aminobenzoate from chorismate: step 2/2. Its function is as follows. Involved in the biosynthesis of p-aminobenzoate (PABA), a precursor of tetrahydrofolate. Converts 4-amino-4-deoxychorismate into 4-aminobenzoate (PABA) and pyruvate. The chain is Aminodeoxychorismate lyase (pabC) from Vibrio harveyi (Beneckea harveyi).